A 435-amino-acid polypeptide reads, in one-letter code: Histone acetyltransferase type B subunit 2 (435 aa).

WD repeat units follow at residues 135–175 (NHAG…SKAP), 188–228 (GQTK…KQDP), 238–278 (GHSA…TAKA), 284–324 (GHNA…TKHH), and 328–368 (AHTN…AEQT). Residues 370–374 (DDAED) are interaction with the histone H4 N-terminus. The stretch at 385-425 (GHTSKVCDISWSPSSPWTIASASEDNILQVWEPSRHLRTPY) is one WD 6 repeat.

Belongs to the WD repeat RBAP46/RBAP48/MSI1 family. In terms of assembly, component of the HAT-B complex composed of at least HAT1 and HAT2. The HAT-B complex binds to histone H4 tail.

It is found in the cytoplasm. The protein localises to the nucleus. Its function is as follows. Regulatory subunit of the histone acetylase B (HAT-B) complex. The complex acetylates 'Lys-12' of histone H4 which is required for telomeric silencing. The sequence is that of Histone acetyltransferase type B subunit 2 (HAT2) from Cryptococcus neoformans var. neoformans serotype D (strain B-3501A) (Filobasidiella neoformans).